A 267-amino-acid polypeptide reads, in one-letter code: MITFQLEQGEKLFIPFMTAGDPSEEITIDLALSLQAAGAHAIELGVPYSDPLADGPVIQRASKRALNHGMNIVKAIELAGKMKKNGVKIPVILFTYYNPVLQLDTEYFFALLRKNHISGLLTPDLPFEESSELQKNCQSYDISYISLVAPTSKERLVNIVEQAEGFVYCVSSLGVTGVRQTFDESITDFIQQVKQLSHIPVAVGFGISTREQVDSMNKLSDGVVVGSALVKKIEELHDQLLASDTRQDALREFETYAKTFSPLYSFK.

Catalysis depends on proton acceptor residues Glu43 and Asp54.

The protein belongs to the TrpA family. In terms of assembly, tetramer of two alpha and two beta chains.

It carries out the reaction (1S,2R)-1-C-(indol-3-yl)glycerol 3-phosphate + L-serine = D-glyceraldehyde 3-phosphate + L-tryptophan + H2O. It functions in the pathway amino-acid biosynthesis; L-tryptophan biosynthesis; L-tryptophan from chorismate: step 5/5. Functionally, the alpha subunit is responsible for the aldol cleavage of indoleglycerol phosphate to indole and glyceraldehyde 3-phosphate. The sequence is that of Tryptophan synthase alpha chain from Bacillus pumilus (strain SAFR-032).